A 309-amino-acid polypeptide reads, in one-letter code: DNA-directed RNA polymerase subunit alpha (309 aa).

The interval 1 to 225 is alpha N-terminal domain (alpha-NTD); the sequence is MFQVQCLESA…SLFKLVNSAD (225 aa). The alpha C-terminal domain (alpha-CTD) stretch occupies residues 237–309; that stretch reads IVQVSQTDVT…LHERFNLTLN (73 aa).

The protein belongs to the RNA polymerase alpha chain family. In plastids the minimal PEP RNA polymerase catalytic core is composed of four subunits: alpha, beta, beta', and beta''. When a (nuclear-encoded) sigma factor is associated with the core the holoenzyme is formed, which can initiate transcription.

Its subcellular location is the plastid. The protein resides in the chloroplast. It carries out the reaction RNA(n) + a ribonucleoside 5'-triphosphate = RNA(n+1) + diphosphate. Functionally, DNA-dependent RNA polymerase catalyzes the transcription of DNA into RNA using the four ribonucleoside triphosphates as substrates. The protein is DNA-directed RNA polymerase subunit alpha of Emiliania huxleyi (Coccolithophore).